A 92-amino-acid polypeptide reads, in one-letter code: Large ribosomal subunit protein bL34m (92 aa).

A mitochondrion-targeting transit peptide spans 1 to 46 (MAFLARCFGCQACRSVALLSGRYLQSRVWMGLPDSWPLLSLQQARG). Position 71 is a phosphoserine (serine 71).

It belongs to the bacterial ribosomal protein bL34 family. Component of the mitochondrial ribosome large subunit (39S) which comprises a 16S rRNA and about 50 distinct proteins.

The protein localises to the mitochondrion. In Mus musculus (Mouse), this protein is Large ribosomal subunit protein bL34m (Mrpl34).